Here is a 429-residue protein sequence, read N- to C-terminus: Bifunctional protein GlmU (429 aa).

The tract at residues 1-223 (MKTSILILAA…EDEFMGINDK (223 aa)) is pyrophosphorylase. UDP-N-acetyl-alpha-D-glucosamine-binding positions include 8-11 (LAAG), Lys22, and 81-82 (GT). Mg(2+) is bound at residue Asp102. Positions 135, 149, 164, and 221 each coordinate UDP-N-acetyl-alpha-D-glucosamine. Position 221 (Asn221) interacts with Mg(2+). The segment at 224-244 (FELSIAENFMQKKIKKYWMQQ) is linker. Residues 245 to 429 (GVIFHLPQST…KDYYYKKFQK (185 aa)) form an N-acetyltransferase region. Positions 308 and 325 each coordinate UDP-N-acetyl-alpha-D-glucosamine. His336 acts as the Proton acceptor in catalysis. Positions 339 and 350 each coordinate UDP-N-acetyl-alpha-D-glucosamine. Residues 359 to 360 (NY), Ser378, Ala396, and Arg413 each bind acetyl-CoA.

This sequence in the N-terminal section; belongs to the N-acetylglucosamine-1-phosphate uridyltransferase family. It in the C-terminal section; belongs to the transferase hexapeptide repeat family. As to quaternary structure, homotrimer. It depends on Mg(2+) as a cofactor.

It localises to the cytoplasm. It carries out the reaction alpha-D-glucosamine 1-phosphate + acetyl-CoA = N-acetyl-alpha-D-glucosamine 1-phosphate + CoA + H(+). The enzyme catalyses N-acetyl-alpha-D-glucosamine 1-phosphate + UTP + H(+) = UDP-N-acetyl-alpha-D-glucosamine + diphosphate. The protein operates within nucleotide-sugar biosynthesis; UDP-N-acetyl-alpha-D-glucosamine biosynthesis; N-acetyl-alpha-D-glucosamine 1-phosphate from alpha-D-glucosamine 6-phosphate (route II): step 2/2. It functions in the pathway nucleotide-sugar biosynthesis; UDP-N-acetyl-alpha-D-glucosamine biosynthesis; UDP-N-acetyl-alpha-D-glucosamine from N-acetyl-alpha-D-glucosamine 1-phosphate: step 1/1. It participates in bacterial outer membrane biogenesis; LPS lipid A biosynthesis. Its function is as follows. Catalyzes the last two sequential reactions in the de novo biosynthetic pathway for UDP-N-acetylglucosamine (UDP-GlcNAc). The C-terminal domain catalyzes the transfer of acetyl group from acetyl coenzyme A to glucosamine-1-phosphate (GlcN-1-P) to produce N-acetylglucosamine-1-phosphate (GlcNAc-1-P), which is converted into UDP-GlcNAc by the transfer of uridine 5-monophosphate (from uridine 5-triphosphate), a reaction catalyzed by the N-terminal domain. In Campylobacter jejuni subsp. jejuni serotype O:2 (strain ATCC 700819 / NCTC 11168), this protein is Bifunctional protein GlmU.